The following is a 938-amino-acid chain: Cyclin-dependent kinase-like 5 (938 aa).

One can recognise a Protein kinase domain in the interval 13–297 (FEILGVVGEG…TEQCLNHPTF (285 aa)). Residues 19–27 (VGEGAYGVV) and Lys42 contribute to the ATP site. Catalysis depends on Asp135, which acts as the Proton acceptor. Disordered stretches follow at residues 298–348 (QTQR…DIQN), 382–566 (KTYQ…RHSK), 646–865 (SPQP…LTAQ), and 877–938 (HPLS…KWKQ). 2 stretches are compositionally biased toward polar residues: residues 319–331 (ESSTLSNRNQSTK) and 382–402 (KTYQASTQPGSSSKDLTNNNI). Ser407 is modified (phosphoserine). Residues 407 to 417 (SPKEAKSKTEF) show a composition bias toward basic and acidic residues. Polar residues-rich tracts occupy residues 434–462 (LKSSTRSQQNRHSFMESSQSKAGTLQPSE), 473–482 (IPQSSRSPSY), and 494–548 (DSKS…SGRN). At Ser479 the chain carries Phosphoserine. Composition is skewed to basic and acidic residues over residues 549–559 (NRNEGTLDSRR) and 679–704 (QKSEGGVYHDPHSDDGTAPKENRHLY). The residue at position 720 (Ser720) is a Phosphoserine. Residues 728 to 748 (HENNVSTRVSSLPSDSSSGTN) are compositionally biased toward polar residues. Ser761 is modified (phosphoserine). Basic and acidic residues-rich tracts occupy residues 769–778 (DQLKEKEKQG) and 817–827 (RPKEWRPEKLS). The span at 880–891 (SQATGGSSNIRQ) shows a compositional bias: polar residues.

Belongs to the protein kinase superfamily. CMGC Ser/Thr protein kinase family. CDC2/CDKX subfamily. In terms of assembly, interacts with MECP2. In terms of processing, autophosphorylated.

It is found in the nucleus. The protein resides in the cytoplasm. Its subcellular location is the cytoskeleton. The protein localises to the cilium basal body. It localises to the microtubule organizing center. It is found in the centrosome. The catalysed reaction is L-seryl-[protein] + ATP = O-phospho-L-seryl-[protein] + ADP + H(+). The enzyme catalyses L-threonyl-[protein] + ATP = O-phospho-L-threonyl-[protein] + ADP + H(+). In terms of biological role, mediates phosphorylation of MECP2. May regulate ciliogenesis. The polypeptide is Cyclin-dependent kinase-like 5 (Mus musculus (Mouse)).